Here is a 281-residue protein sequence, read N- to C-terminus: 2-dehydro-3-deoxyphosphooctonate aldolase (281 aa).

It belongs to the KdsA family.

The protein resides in the cytoplasm. It catalyses the reaction D-arabinose 5-phosphate + phosphoenolpyruvate + H2O = 3-deoxy-alpha-D-manno-2-octulosonate-8-phosphate + phosphate. It functions in the pathway carbohydrate biosynthesis; 3-deoxy-D-manno-octulosonate biosynthesis; 3-deoxy-D-manno-octulosonate from D-ribulose 5-phosphate: step 2/3. The protein operates within bacterial outer membrane biogenesis; lipopolysaccharide biosynthesis. The chain is 2-dehydro-3-deoxyphosphooctonate aldolase from Pseudomonas syringae pv. syringae (strain B728a).